Consider the following 213-residue polypeptide: Large ribosomal subunit protein uL4 (213 aa).

The disordered stretch occupies residues 41–75 (GTASTKTRAEVSRSGKKMYSQKGTGNARHGDRSVP).

It belongs to the universal ribosomal protein uL4 family. Part of the 50S ribosomal subunit.

Functionally, one of the primary rRNA binding proteins, this protein initially binds near the 5'-end of the 23S rRNA. It is important during the early stages of 50S assembly. It makes multiple contacts with different domains of the 23S rRNA in the assembled 50S subunit and ribosome. Its function is as follows. Forms part of the polypeptide exit tunnel. In Deinococcus geothermalis (strain DSM 11300 / CIP 105573 / AG-3a), this protein is Large ribosomal subunit protein uL4.